Reading from the N-terminus, the 343-residue chain is S-adenosylmethionine:tRNA ribosyltransferase-isomerase (343 aa).

This sequence belongs to the QueA family. Monomer.

The protein resides in the cytoplasm. It carries out the reaction 7-aminomethyl-7-carbaguanosine(34) in tRNA + S-adenosyl-L-methionine = epoxyqueuosine(34) in tRNA + adenine + L-methionine + 2 H(+). Its pathway is tRNA modification; tRNA-queuosine biosynthesis. Transfers and isomerizes the ribose moiety from AdoMet to the 7-aminomethyl group of 7-deazaguanine (preQ1-tRNA) to give epoxyqueuosine (oQ-tRNA). This chain is S-adenosylmethionine:tRNA ribosyltransferase-isomerase, found in Geobacter metallireducens (strain ATCC 53774 / DSM 7210 / GS-15).